The primary structure comprises 880 residues: Alanine--tRNA ligase (880 aa).

The Zn(2+) site is built by H567, H571, C669, and H673.

Belongs to the class-II aminoacyl-tRNA synthetase family. Zn(2+) serves as cofactor.

The protein localises to the cytoplasm. It carries out the reaction tRNA(Ala) + L-alanine + ATP = L-alanyl-tRNA(Ala) + AMP + diphosphate. Catalyzes the attachment of alanine to tRNA(Ala) in a two-step reaction: alanine is first activated by ATP to form Ala-AMP and then transferred to the acceptor end of tRNA(Ala). Also edits incorrectly charged Ser-tRNA(Ala) and Gly-tRNA(Ala) via its editing domain. The protein is Alanine--tRNA ligase of Bacillus cereus (strain ATCC 14579 / DSM 31 / CCUG 7414 / JCM 2152 / NBRC 15305 / NCIMB 9373 / NCTC 2599 / NRRL B-3711).